The following is a 228-amino-acid chain: Fibrillarin-like rRNA/tRNA 2'-O-methyltransferase (228 aa).

S-adenosyl-L-methionine contacts are provided by residues 85–86 (TT), 103–104 (EF), 128–129 (DA), and 148–151 (DVAQ).

The protein belongs to the methyltransferase superfamily. Fibrillarin family. In terms of assembly, interacts with nop5. Component of box C/D small ribonucleoprotein (sRNP) particles that contain rpl7ae, FlpA and nop5, plus a guide RNA.

Functionally, involved in pre-rRNA and tRNA processing. Utilizes the methyl donor S-adenosyl-L-methionine to catalyze the site-specific 2'-hydroxyl methylation of ribose moieties in rRNA and tRNA. Site specificity is provided by a guide RNA that base pairs with the substrate. Methylation occurs at a characteristic distance from the sequence involved in base pairing with the guide RNA. The protein is Fibrillarin-like rRNA/tRNA 2'-O-methyltransferase of Methanococcus voltae.